Consider the following 123-residue polypeptide: Large ribosomal subunit protein uL14c (123 aa).

This sequence belongs to the universal ribosomal protein uL14 family. In terms of assembly, part of the 50S ribosomal subunit.

The protein localises to the plastid. It is found in the chloroplast. In terms of biological role, binds to 23S rRNA. This is Large ribosomal subunit protein uL14c from Lolium perenne (Perennial ryegrass).